A 453-amino-acid polypeptide reads, in one-letter code: Choline kinase alpha (453 aa).

A disordered region spans residues 22-81 (CGGSAAPTPGVGQQRDAAGELESKQLGGRSQPLALPPPPPPPLPLPPPPSPPLADEQPEP). Over residues 55–73 (ALPPPPPPPLPLPPPPSPP) the composition is skewed to pro residues. Serine 71 bears the Phosphoserine mark. ATP-binding positions include 113–119 (RGGLSNM), arginine 142, and 203–209 (QFIPSRR). Phosphocholine is bound at residue 115–117 (GLS). Lysine 243 carries the post-translational modification N6-acetyllysine. Residue serine 275 is modified to Phosphoserine. Residues glutamine 304 and aspartate 326 each contribute to the ATP site.

This sequence belongs to the choline/ethanolamine kinase family. As to quaternary structure, heterodimer with CHKB. Homodimer. Monomer; acetylation by KAT5 promotes dissociation of the homodimer and monomerization. In terms of processing, phosphorylated at Ser-275 by AMPK in response to glucose deprivation, leading to localization to lipid droplets. Acetylated by KAT5 at Lys-243 following phosphorylation by AMPK, leading to monomerization and conversion into a tyrosine-protein kinase. As to expression, testis, brain, lung, kidney and liver.

Its subcellular location is the cytoplasm. The protein localises to the cytosol. It is found in the lipid droplet. It carries out the reaction choline + ATP = phosphocholine + ADP + H(+). It catalyses the reaction ethanolamine + ATP = phosphoethanolamine + ADP + H(+). The enzyme catalyses L-tyrosyl-[protein] + ATP = O-phospho-L-tyrosyl-[protein] + ADP + H(+). It functions in the pathway phospholipid metabolism; phosphatidylcholine biosynthesis; phosphocholine from choline: step 1/1. Its pathway is phospholipid metabolism; phosphatidylethanolamine biosynthesis; phosphatidylethanolamine from ethanolamine: step 1/3. Functionally, plays a key role in phospholipid biosynthesis by catalyzing the phosphorylation of free choline to phosphocholine, the first step in phosphatidylcholine biosynthesis. Also phosphorylates ethanolamine, thereby contributing to phosphatidylethanolamine biosynthesis. Has higher activity with choline. In terms of biological role, this isoform plays a key role in lipolysis of lipid droplets following glucose deprivation. In response to glucose deprivation, phosphorylated by AMPK, promoting localization to lipid droplets. Phosphorylation is followed by acetylation by KAT5, leading to dissociation of the homodimer into a monomer. Monomeric CHKA isoform 1 is converted into a tyrosine-protein kinase, which phosphorylates lipid droplet structural proteins PLIN2 and PLIN3, leading to lipolysis of lipid droplets. The sequence is that of Choline kinase alpha (Chka) from Rattus norvegicus (Rat).